Reading from the N-terminus, the 545-residue chain is Chaperonin GroEL (545 aa).

Residues 30–33 (TLGP), K51, 87–91 (DGTTT), G415, and D495 contribute to the ATP site.

This sequence belongs to the chaperonin (HSP60) family. Forms a cylinder of 14 subunits composed of two heptameric rings stacked back-to-back. Interacts with the co-chaperonin GroES.

The protein resides in the cytoplasm. It catalyses the reaction ATP + H2O + a folded polypeptide = ADP + phosphate + an unfolded polypeptide.. In terms of biological role, together with its co-chaperonin GroES, plays an essential role in assisting protein folding. The GroEL-GroES system forms a nano-cage that allows encapsulation of the non-native substrate proteins and provides a physical environment optimized to promote and accelerate protein folding. This chain is Chaperonin GroEL, found in Yersinia pestis bv. Antiqua (strain Antiqua).